Here is a 98-residue protein sequence, read N- to C-terminus: Large ribosomal subunit protein uL23 (98 aa).

It belongs to the universal ribosomal protein uL23 family. In terms of assembly, part of the 50S ribosomal subunit. Contacts protein L29, and trigger factor when it is bound to the ribosome.

Its function is as follows. One of the early assembly proteins it binds 23S rRNA. One of the proteins that surrounds the polypeptide exit tunnel on the outside of the ribosome. Forms the main docking site for trigger factor binding to the ribosome. The protein is Large ribosomal subunit protein uL23 of Hydrogenovibrio crunogenus (strain DSM 25203 / XCL-2) (Thiomicrospira crunogena).